A 481-amino-acid polypeptide reads, in one-letter code: Glutamate--cysteine ligase (481 aa).

It belongs to the glutamate--cysteine ligase type 1 family. Type 1 subfamily.

The catalysed reaction is L-cysteine + L-glutamate + ATP = gamma-L-glutamyl-L-cysteine + ADP + phosphate + H(+). It participates in sulfur metabolism; glutathione biosynthesis; glutathione from L-cysteine and L-glutamate: step 1/2. This is Glutamate--cysteine ligase from Clostridium acetobutylicum (strain ATCC 824 / DSM 792 / JCM 1419 / IAM 19013 / LMG 5710 / NBRC 13948 / NRRL B-527 / VKM B-1787 / 2291 / W).